The primary structure comprises 548 residues: LDL receptor repeat-containing protein egg-2 (548 aa).

Topologically, residues 1-49 are cytoplasmic; the sequence is MSQQAGNAQRGRFDEEPMSLGEKISHRMDQLKEIVSSSCPCAGKFPPVA. A helical; Signal-anchor for type II membrane protein transmembrane segment spans residues 50–70; sequence IVLIVALIILGVIIAVPLVIF. Topologically, residues 71-548 are extracellular; that stretch reads LSPSAQAMSS…LALKNSGLRP (478 aa). Asn119 is a glycosylation site (N-linked (GlcNAc...) asparagine). 8 LDL-receptor class A domains span residues 122-160, 161-213, 215-252, 253-288, 291-328, 370-412, 416-454, and 455-492; these read TCSG…ENCK, ECQS…ASCR, KCSK…SNCN, KCQK…HQCD, TCSG…ENCP, KCDP…KKCT, ECVV…KGCD, and KCPS…HKCS. Disulfide bonds link Cys130-Cys150, Cys144-Cys159, Cys162-Cys190, Cys168-Cys203, Cys197-Cys212, Cys216-Cys229, Cys223-Cys242, Cys236-Cys251, Cys254-Cys265, Cys261-Cys278, Cys272-Cys287, Cys292-Cys305, Cys300-Cys318, Cys312-Cys327, Cys371-Cys389, Cys379-Cys402, Cys396-Cys411, Cys417-Cys431, Cys427-Cys444, Cys438-Cys453, Cys456-Cys469, Cys463-Cys482, and Cys476-Cys491. Asn244 carries an N-linked (GlcNAc...) asparagine glycan. N-linked (GlcNAc...) asparagine glycosylation is present at Asn527.

The protein localises to the cell membrane. The protein resides in the endosome membrane. Functionally, probable receptor which is required for the oocyte-to-zygote transition although its exact function is controversial. Redundantly with egg-1, seems to be required for fertilization probably by promoting the interaction or fusion between sperm and oocyte. Conversely, shown to be dispensable for fertilization but required together with egg-1 for the formation of a continuous and cohesive eggshell chitin layer by maintaining a homogenous distribution of chitin synthase chs-1 at the unfertilized oocyte cell membrane. Appears to recruit or maintain together to the unfertilized oocyte cortex several proteins including chs-1, kinase mbk-2 and pseudophosphatase egg-3, and possibly egg-4 and egg-5. The protein is LDL receptor repeat-containing protein egg-2 of Caenorhabditis elegans.